Here is a 457-residue protein sequence, read N- to C-terminus: Heme sensor protein HssS (457 aa).

The next 2 helical transmembrane spans lie at 9-29 (IAIY…VLTN) and 164-184 (TFLA…VIAS). The 53-residue stretch at 186–238 (YSIIRPVKKLKLATERLIDGDFETPIKQTRKDEIGTLQYHFNKMRESLGQVDQ) folds into the HAMP domain. The region spanning 246-456 (NVSHEIKTPL…TFTITLPNNS (211 aa)) is the Histidine kinase domain. Position 249 is a phosphohistidine; by autocatalysis (H249).

Post-translationally, autophosphorylated.

The protein localises to the cell membrane. The enzyme catalyses ATP + protein L-histidine = ADP + protein N-phospho-L-histidine.. Member of the two-component regulatory system HssS/HssR involved in intracellular heme homeostasis and tempering of staphylococcal virulence. HssS functions as a heme sensor histidine kinase which is autophosphorylated at a histidine residue and transfers its phosphate group to an aspartate residue of HssR. HssR/HssS activates the expression of hrtAB, an efflux pump, in response to extracellular heme, hemin, hemoglobin or blood. The chain is Heme sensor protein HssS (hssS) from Staphylococcus aureus (strain Mu3 / ATCC 700698).